The sequence spans 695 residues: Elongation factor G (695 aa).

Positions 10–289 (KNLRNIGIMA…AVVAWMPSPL (280 aa)) constitute a tr-type G domain. Residues 19–26 (AHIDAGKT), 83–87 (DTPGH), and 137–140 (NKMD) each bind GTP.

The protein belongs to the TRAFAC class translation factor GTPase superfamily. Classic translation factor GTPase family. EF-G/EF-2 subfamily.

It localises to the cytoplasm. In terms of biological role, catalyzes the GTP-dependent ribosomal translocation step during translation elongation. During this step, the ribosome changes from the pre-translocational (PRE) to the post-translocational (POST) state as the newly formed A-site-bound peptidyl-tRNA and P-site-bound deacylated tRNA move to the P and E sites, respectively. Catalyzes the coordinated movement of the two tRNA molecules, the mRNA and conformational changes in the ribosome. In Protochlamydia amoebophila (strain UWE25), this protein is Elongation factor G.